A 112-amino-acid chain; its full sequence is S-adenosylmethionine decarboxylase proenzyme (112 aa).

Serine 62 acts as the Schiff-base intermediate with substrate; via pyruvic acid in catalysis. The residue at position 62 (serine 62) is a Pyruvic acid (Ser); by autocatalysis. Histidine 67 functions as the Proton acceptor; for processing activity in the catalytic mechanism. Residue cysteine 82 is the Proton donor; for catalytic activity of the active site.

It belongs to the prokaryotic AdoMetDC family. Type 1 subfamily. Heterotetramer of two alpha and two beta chains arranged as a dimer of alpha/beta heterodimers. It depends on pyruvate as a cofactor. Is synthesized initially as an inactive proenzyme. Formation of the active enzyme involves a self-maturation process in which the active site pyruvoyl group is generated from an internal serine residue via an autocatalytic post-translational modification. Two non-identical subunits are generated from the proenzyme in this reaction, and the pyruvate is formed at the N-terminus of the alpha chain, which is derived from the carboxyl end of the proenzyme. The post-translation cleavage follows an unusual pathway, termed non-hydrolytic serinolysis, in which the side chain hydroxyl group of the serine supplies its oxygen atom to form the C-terminus of the beta chain, while the remainder of the serine residue undergoes an oxidative deamination to produce ammonia and the pyruvoyl group blocking the N-terminus of the alpha chain.

The enzyme catalyses S-adenosyl-L-methionine + H(+) = S-adenosyl 3-(methylsulfanyl)propylamine + CO2. It functions in the pathway amine and polyamine biosynthesis; S-adenosylmethioninamine biosynthesis; S-adenosylmethioninamine from S-adenosyl-L-methionine: step 1/1. Catalyzes the decarboxylation of S-adenosylmethionine to S-adenosylmethioninamine (dcAdoMet), the propylamine donor required for the synthesis of the polyamines spermine and spermidine from the diamine putrescine. The polypeptide is S-adenosylmethionine decarboxylase proenzyme (Archaeoglobus fulgidus (strain ATCC 49558 / DSM 4304 / JCM 9628 / NBRC 100126 / VC-16)).